A 333-amino-acid chain; its full sequence is MIDITLPLTDIHRHLDGNIRAQTILDLGRQFNIALPAQTLETLIPHVQVTSTEPDLVSFLTKLDWGVKVLASLDACRRVAFENIEDAARNGLHYVELRFSPGYMAMAHQLPIAGVVEAVIDGVRDGCNTFGVEARLIGIMSRTFGEAACLQELDALLAHRENITALDLAGDELGFPGSLFLSHFNRARDAGWHITVHAGEAAGPESIWQAIRELGAERIGHGVKAVEDRALMDFLAQQRIGIESCLTSNIQTSTVASLADHPLKTFLEHGVLASLNTDDPAVQGVDIIHEYHVAAPAAGLSREQIRQAQINGLEIAFLSDSEKRALREKVAEA.

Positions 12 and 14 each coordinate Zn(2+). His-14 and Asp-16 together coordinate substrate. Pentostatin is bound by residues 14–16, Ser-141, and Gly-170; that span reads HLD. Position 170 (Gly-170) interacts with substrate. His-197 provides a ligand contact to Zn(2+). Pentostatin contacts are provided by Glu-200, His-221, and Asp-278. Glu-200 (proton donor) is an active-site residue. Residue Asp-278 coordinates Zn(2+). Residue Asp-279 coordinates substrate.

This sequence belongs to the metallo-dependent hydrolases superfamily. Adenosine and AMP deaminases family. Adenosine deaminase subfamily. Requires Zn(2+) as cofactor.

The catalysed reaction is adenosine + H2O + H(+) = inosine + NH4(+). It carries out the reaction 2'-deoxyadenosine + H2O + H(+) = 2'-deoxyinosine + NH4(+). Its function is as follows. Catalyzes the hydrolytic deamination of adenosine and 2-deoxyadenosine. The sequence is that of Adenosine deaminase from Salmonella typhimurium (strain LT2 / SGSC1412 / ATCC 700720).